The sequence spans 99 residues: Signal recognition particle 19 kDa protein (99 aa).

Belongs to the SRP19 family. As to quaternary structure, part of the signal recognition particle protein translocation system, which is composed of SRP and FtsY. Archaeal SRP consists of a 7S RNA molecule of 300 nucleotides and two protein subunits: SRP54 and SRP19.

It localises to the cytoplasm. In terms of biological role, involved in targeting and insertion of nascent membrane proteins into the cytoplasmic membrane. Binds directly to 7S RNA and mediates binding of the 54 kDa subunit of the SRP. This is Signal recognition particle 19 kDa protein from Pyrococcus abyssi (strain GE5 / Orsay).